Consider the following 678-residue polypeptide: NADPH--cytochrome P450 reductase (678 aa).

Position 2 is an N-acetylglycine (glycine 2). The Lumenal segment spans residues 2–22 (GDSHEDTSATVPEAVAEEVSL). Residues 23–43 (FSTTDIVLFSLIVGVLTYWFI) traverse the membrane as a helical segment. Residues 44-678 (FKKKKEEIPE…KGRYSLDVWS (635 aa)) lie on the Cytoplasmic side of the membrane. The Flavodoxin-like domain maps to 80–224 (IIVFYGSQTG…DFITWREQFW (145 aa)). FMN contacts are provided by residues 86–91 (SQTGTA), 138–141 (ATYG), 173–182 (LGNKTYEHFN), and aspartate 208. The FAD-binding FR-type domain maps to 279–521 (KNPFLAAVTT…FVRKSQFRLP (243 aa)). Arginine 298 contacts NADP(+). FAD-binding positions include arginine 424, 454–457 (RYYS), 472–474 (CAV), tyrosine 478, and 488–491 (GVAT). Residues threonine 535, 596–597 (SR), 602–606 (KVYVQ), and aspartate 639 each bind NADP(+). FAD is bound at residue tryptophan 677.

The protein belongs to the NADPH--cytochrome P450 reductase family. This sequence in the N-terminal section; belongs to the flavodoxin family. It in the C-terminal section; belongs to the flavoprotein pyridine nucleotide cytochrome reductase family. FAD serves as cofactor. It depends on FMN as a cofactor.

It is found in the endoplasmic reticulum membrane. The catalysed reaction is 2 oxidized [cytochrome P450] + NADPH = 2 reduced [cytochrome P450] + NADP(+) + H(+). Functionally, this enzyme is required for electron transfer from NADP to cytochrome P450 in microsomes. It can also provide electron transfer to heme oxygenase and cytochrome B5. The polypeptide is NADPH--cytochrome P450 reductase (Mus musculus (Mouse)).